Here is a 522-residue protein sequence, read N- to C-terminus: MEIETRPHISGDEKEEEQPLSPAARLFHAPEFNCNIISVIGFKSKLDPCVFIRGFKESFIRHPRFSSKLVTDENGQNQRWVRTNVVVEDHFIVPKIKPQNIENSNAFLEDYVSDLMKIPLDTSRPLWELHLLDLKTSDAENVAVLKIHHSVGDGMSIMSLVLACMRKTSNPDELPSLPYQYRSSSRSSLLTTGSRSDSRLLWLVKVIWTAVILGLNTVCDALEFIVTTLFVKDTETPIKGDFLSTKSKQLRLVHRTVSLDDIKLTKNAMNMTINDVVLGVTQAGLSRYLARRYGEEETKNRKQKKLPKRIRLRSALLVNLRPTTGIQDLADMMEKGSKCRWGNWFGYVVFPFSIALRDDPLEHLEIAQKTISRKKNSYGAMLTYIFCRIIVKLLGIKVAASIINRMVSNTTMTFSNMVGPVEEVSFYGHPITYFASSAYGHPHALTIHCQSYMNKMTITLIVDPTVISDPHRLCDDWEESLRSIKAAVTKRESLRLWDYLRILHNRVAWLLYQIAGLLYRML.

The segment covering 1 to 12 has biased composition (basic and acidic residues); it reads MEIETRPHISGD. Residues 1-20 form a disordered region; it reads MEIETRPHISGDEKEEEQPL. Topologically, residues 1 to 205 are cytoplasmic; sequence MEIETRPHIS…SDSRLLWLVK (205 aa). H149 functions as the Proton acceptor in the catalytic mechanism. A helical membrane pass occupies residues 206-226; it reads VIWTAVILGLNTVCDALEFIV. Residues 227–522 are Lumenal-facing; it reads TTLFVKDTET…QIAGLLYRML (296 aa). 2 N-linked (GlcNAc...) asparagine glycosylation sites follow: N270 and N409.

In the N-terminal section; belongs to the long-chain O-acyltransferase family. In terms of tissue distribution, mostly expressed in roots, flowers and siliques.

Its subcellular location is the cell membrane. The protein localises to the endoplasmic reticulum membrane. The enzyme catalyses an acyl-CoA + a 1,2-diacyl-sn-glycerol = a triacyl-sn-glycerol + CoA. It carries out the reaction a long chain fatty alcohol + a fatty acyl-CoA = a wax ester + CoA. It functions in the pathway glycerolipid metabolism; triacylglycerol biosynthesis. The protein operates within lipid metabolism. Bifunctional wax ester synthase/diacylglycerol acyltransferase. Involved in cuticular wax biosynthesis. In Arabidopsis thaliana (Mouse-ear cress), this protein is Wax ester synthase/diacylglycerol acyltransferase 4.